A 690-amino-acid polypeptide reads, in one-letter code: uncharacterized protein (690 aa).

The protein to M.genitalium MG366 and M.pneumoniae MPN544.

This is an uncharacterized protein from Ureaplasma parvum serovar 3 (strain ATCC 700970).